The chain runs to 365 residues: Chorismate synthase (365 aa).

NADP(+) is bound by residues arginine 48 and arginine 54. FMN contacts are provided by residues 125–127, 237–238, glycine 277, 292–296, and arginine 318; these read RSS, NA, and KPTSS.

It belongs to the chorismate synthase family. In terms of assembly, homotetramer. FMNH2 is required as a cofactor.

It carries out the reaction 5-O-(1-carboxyvinyl)-3-phosphoshikimate = chorismate + phosphate. It functions in the pathway metabolic intermediate biosynthesis; chorismate biosynthesis; chorismate from D-erythrose 4-phosphate and phosphoenolpyruvate: step 7/7. In terms of biological role, catalyzes the anti-1,4-elimination of the C-3 phosphate and the C-6 proR hydrogen from 5-enolpyruvylshikimate-3-phosphate (EPSP) to yield chorismate, which is the branch point compound that serves as the starting substrate for the three terminal pathways of aromatic amino acid biosynthesis. This reaction introduces a second double bond into the aromatic ring system. The polypeptide is Chorismate synthase (Polaromonas naphthalenivorans (strain CJ2)).